Here is a 130-residue protein sequence, read N- to C-terminus: MIGNYNYGTGRRKSSVARVFIKAGSGKIVVNDKPVDEYFSRETGRMIVRQPLVLTDNLNRFDIMVNVAGGGESGQAGAVRHGITRALIDLDAGMKPTLKAAGLVTRDAREVERKKVGFHKARRRKQFSKR.

The protein belongs to the universal ribosomal protein uS9 family.

The polypeptide is Small ribosomal subunit protein uS9 (Thiobacillus denitrificans (strain ATCC 25259 / T1)).